The chain runs to 317 residues: MTSLSNSLSADTGTTSFSPAAGGEVSDFFALLKPRVMVLVIFTALVGMVVSDATVNPVIAAISLLMIAVGAGASGCLNMWWDADIDALMTRTAKRPIPDGRIRPDEALAFGIVLSVGSVLILGLASNWLAAGLLAFTIVFYAVIYSMWLKRATAQNIVIGGAAGALPPVVGQAAVTGHVGIESLVLFAIIFIWTPPHFWALALVKSGEYARAGIPMMPNVAGPDSTRRQIIWYSLVLAPLALLPVWLGFGGWLYAVVGVLGGLGMLAGAVQVYRLREGEPERKAAMGLFAFSILYLFLLFSALLAEQGLGLFRAVAA.

The next 9 membrane-spanning stretches (helical) occupy residues 36 to 56, 57 to 77, 108 to 128, 129 to 149, 157 to 177, 184 to 204, 230 to 247, 251 to 273, and 284 to 304; these read VMVL…ATVN, PVIA…SGCL, LAFG…ASNW, LAAG…SMWL, IVIG…AVTG, LVLF…LALV, IIWY…PVWL, GWLY…VQVY, and AAMG…SALL.

This sequence belongs to the UbiA prenyltransferase family. Protoheme IX farnesyltransferase subfamily.

It is found in the cell inner membrane. It carries out the reaction heme b + (2E,6E)-farnesyl diphosphate + H2O = Fe(II)-heme o + diphosphate. It participates in porphyrin-containing compound metabolism; heme O biosynthesis; heme O from protoheme: step 1/1. Its function is as follows. Converts heme B (protoheme IX) to heme O by substitution of the vinyl group on carbon 2 of heme B porphyrin ring with a hydroxyethyl farnesyl side group. The polypeptide is Protoheme IX farnesyltransferase (Methylorubrum extorquens (strain CM4 / NCIMB 13688) (Methylobacterium extorquens)).